A 102-amino-acid polypeptide reads, in one-letter code: Large ribosomal subunit protein bL21 (102 aa).

It belongs to the bacterial ribosomal protein bL21 family. As to quaternary structure, part of the 50S ribosomal subunit. Contacts protein L20.

This protein binds to 23S rRNA in the presence of protein L20. This is Large ribosomal subunit protein bL21 from Ehrlichia chaffeensis (strain ATCC CRL-10679 / Arkansas).